We begin with the raw amino-acid sequence, 308 residues long: Eugenol synthase 1 (308 aa).

Residues 13-16 (TGYI), 35-45 (VRESTVSDPAK), R36, 86-88 (QMQ), 111-113 (SEF), K133, and 153-155 (NCF) contribute to the NADP(+) site. Catalysis depends on K133, which acts as the Proton donor/acceptor.

It belongs to the NmrA-type oxidoreductase family. In flowers, mostly expressed in limbs, and, to a lower extent, in tubes.

The enzyme catalyses eugenol + a carboxylate + NADP(+) = a coniferyl ester + NADPH. It carries out the reaction eugenol + acetate + NADP(+) = (E)-coniferyl acetate + NADPH. It participates in aromatic compound metabolism; phenylpropanoid biosynthesis. Functionally, involved in the biosynthesis of the floral volatile eugenol. Catalyzes the synthesis of the phenylpropene eugenol from coniferyl acetate. Phenylpropenes are produced by plants as defense compounds with antimicrobial and antianimal properties, or as floral attractants of pollinators. The polypeptide is Eugenol synthase 1 (Petunia hybrida (Petunia)).